We begin with the raw amino-acid sequence, 525 residues long: Vanin-like protein 2 (525 aa).

The signal sequence occupies residues 1–27 (MAKNYWGFFLFCLALGLMLNLSQQASL). Asn20 and Asn61 each carry an N-linked (GlcNAc...) asparagine glycan. In terms of domain architecture, CN hydrolase spans 33–303 (YTAGVVEFEP…RSIYVARVPK (271 aa)). Residue Glu72 is the Proton acceptor of the active site. 3 N-linked (GlcNAc...) asparagine glycosylation sites follow: Asn99, Asn116, and Asn124. Lys167 (proton donor) is an active-site residue. Asn176 carries N-linked (GlcNAc...) asparagine glycosylation. The active-site Nucleophile is the Cys199. N-linked (GlcNAc...) asparagine glycosylation is found at Asn333, Asn348, and Asn375.

Belongs to the carbon-nitrogen hydrolase superfamily. BTD/VNN family. As to expression, expressed in third instar larvae.

The protein localises to the secreted. This Drosophila melanogaster (Fruit fly) protein is Vanin-like protein 2.